The primary structure comprises 373 residues: Chaperone protein DnaJ (373 aa).

In terms of domain architecture, J spans 5 to 69 (DYYEVLGVNK…NKRVNYDQFG (65 aa)). The segment at 130–212 (GTKKEISIKK…CKGKGTENKT (83 aa)) adopts a CR-type zinc-finger fold. Zn(2+) is bound by residues cysteine 143, cysteine 146, cysteine 160, cysteine 163, cysteine 186, cysteine 189, cysteine 200, and cysteine 203. CXXCXGXG motif repeat units lie at residues 143–150 (CHTCNGDG), 160–167 (CSYCNGAG), 186–193 (CPKCEGSG), and 200–207 (CPTCKGKG).

Belongs to the DnaJ family. As to quaternary structure, homodimer. Zn(2+) is required as a cofactor.

The protein resides in the cytoplasm. Functionally, participates actively in the response to hyperosmotic and heat shock by preventing the aggregation of stress-denatured proteins and by disaggregating proteins, also in an autonomous, DnaK-independent fashion. Unfolded proteins bind initially to DnaJ; upon interaction with the DnaJ-bound protein, DnaK hydrolyzes its bound ATP, resulting in the formation of a stable complex. GrpE releases ADP from DnaK; ATP binding to DnaK triggers the release of the substrate protein, thus completing the reaction cycle. Several rounds of ATP-dependent interactions between DnaJ, DnaK and GrpE are required for fully efficient folding. Also involved, together with DnaK and GrpE, in the DNA replication of plasmids through activation of initiation proteins. In Staphylococcus epidermidis (strain ATCC 35984 / DSM 28319 / BCRC 17069 / CCUG 31568 / BM 3577 / RP62A), this protein is Chaperone protein DnaJ.